Consider the following 149-residue polypeptide: Large ribosomal subunit protein uL22 (149 aa).

It belongs to the universal ribosomal protein uL22 family. Part of the 50S ribosomal subunit.

This protein binds specifically to 23S rRNA. It makes multiple contacts with different domains of the 23S rRNA in the assembled 50S subunit and ribosome. In terms of biological role, the globular domain of the protein is located near the polypeptide exit tunnel on the outside of the subunit, while an extended beta-hairpin is found that lines the wall of the exit tunnel in the center of the 70S ribosome. The sequence is that of Large ribosomal subunit protein uL22 from Picrophilus torridus (strain ATCC 700027 / DSM 9790 / JCM 10055 / NBRC 100828 / KAW 2/3).